The chain runs to 523 residues: uncharacterized protein (523 aa).

This is an uncharacterized protein from Saccharomyces cerevisiae (strain ATCC 204508 / S288c) (Baker's yeast).